Reading from the N-terminus, the 217-residue chain is Flagellar L-ring protein 1 (217 aa).

Residues 1–16 (MTLARLAPLAALLLAA) form the signal peptide. Cys17 carries N-palmitoyl cysteine lipidation. Cys17 carries the S-diacylglycerol cysteine lipid modification.

This sequence belongs to the FlgH family. As to quaternary structure, the basal body constitutes a major portion of the flagellar organelle and consists of four rings (L,P,S, and M) mounted on a central rod.

It localises to the cell outer membrane. Its subcellular location is the bacterial flagellum basal body. Functionally, assembles around the rod to form the L-ring and probably protects the motor/basal body from shearing forces during rotation. The protein is Flagellar L-ring protein 1 of Chromobacterium violaceum (strain ATCC 12472 / DSM 30191 / JCM 1249 / CCUG 213 / NBRC 12614 / NCIMB 9131 / NCTC 9757 / MK).